We begin with the raw amino-acid sequence, 254 residues long: Capsid protein (254 aa).

The span at 1-12 (MRKYTRNTYTMS) shows a compositional bias: polar residues. Residues 1–38 (MRKYTRNTYTMSQKRKVNPQSAWPKKRRTSTTSRKYQW) are disordered. Positions 10–35 (TMSQKRKVNPQSAWPKKRRTSTTSRK) match the Bipartite nuclear localization signal motif.

This sequence belongs to the geminiviridae capsid protein family. In terms of assembly, homomultimer. Binds to single-stranded and double-stranded viral DNA. Interacts (via nuclear localization signal) with host importin alpha-1a.

The protein resides in the virion. It is found in the host nucleus. In terms of biological role, encapsidates the viral genome into characteristic twinned ('geminate') particles. Binds the genomic viral ssDNA and shuttles it into and out of the cell nucleus. Plays a role in protection of the genome from degradation, virus acquisition and transmission by insect vectors, infectivity, and systemic movement. The CP of monopartite geminiviruses is absolutely essential for virus movement. This chain is Capsid protein, found in Beet curly top virus (strain California/Logan) (BCTV).